Consider the following 282-residue polypeptide: Orotidine 5'-phosphate decarboxylase (282 aa).

K95 functions as the Proton donor in the catalytic mechanism.

Belongs to the OMP decarboxylase family. Type 2 subfamily.

The catalysed reaction is orotidine 5'-phosphate + H(+) = UMP + CO2. Its pathway is pyrimidine metabolism; UMP biosynthesis via de novo pathway; UMP from orotate: step 2/2. The polypeptide is Orotidine 5'-phosphate decarboxylase (pyrF) (Mycobacterium leprae (strain TN)).